Reading from the N-terminus, the 117-residue chain is MDKKSARIRRATRARRKLKELGATRLVVHRTPRHIYAQVIAPNGSEVLVAASTVEKAISEQLKYTGNKEAAAAVGKAIAERALEKGVKDVSFDRSGFQYHGRVQALADAAREAGLQF.

This sequence belongs to the universal ribosomal protein uL18 family. As to quaternary structure, part of the 50S ribosomal subunit; part of the 5S rRNA/L5/L18/L25 subcomplex. Contacts the 5S and 23S rRNAs.

In terms of biological role, this is one of the proteins that bind and probably mediate the attachment of the 5S RNA into the large ribosomal subunit, where it forms part of the central protuberance. The polypeptide is Large ribosomal subunit protein uL18 (Edwardsiella ictaluri (strain 93-146)).